The chain runs to 161 residues: Large-conductance mechanosensitive channel (161 aa).

The next 2 membrane-spanning stretches (helical) occupy residues 14–34 (VVDM…VNTL) and 85–105 (GLFL…FILV).

The protein belongs to the MscL family. Homopentamer.

The protein resides in the cell inner membrane. Functionally, channel that opens in response to stretch forces in the membrane lipid bilayer. May participate in the regulation of osmotic pressure changes within the cell. This Chlorobium luteolum (strain DSM 273 / BCRC 81028 / 2530) (Pelodictyon luteolum) protein is Large-conductance mechanosensitive channel.